The sequence spans 217 residues: Large ribosomal subunit protein uL3 (217 aa).

Residues 135-154 (ATHGNSLSHRAPGSIGQCQT) are disordered. The residue at position 153 (Gln-153) is an N5-methylglutamine.

It belongs to the universal ribosomal protein uL3 family. As to quaternary structure, part of the 50S ribosomal subunit. Forms a cluster with proteins L14 and L19. In terms of processing, methylated by PrmB.

Its function is as follows. One of the primary rRNA binding proteins, it binds directly near the 3'-end of the 23S rRNA, where it nucleates assembly of the 50S subunit. The polypeptide is Large ribosomal subunit protein uL3 (Coxiella burnetii (strain CbuG_Q212) (Coxiella burnetii (strain Q212))).